The primary structure comprises 1437 residues: uncharacterized protein (1437 aa).

A signal peptide spans methionine 1–asparagine 25. The Extracellular portion of the chain corresponds to glutamine 26–tryptophan 1326. 7 N-linked (GlcNAc...) asparagine glycosylation sites follow: asparagine 103, asparagine 315, asparagine 364, asparagine 492, asparagine 605, asparagine 676, and asparagine 914. In terms of domain architecture, NIDO spans alanine 193–valine 356. Residues valine 648 to arginine 829 form the AMOP domain. Residues leucine 1327–phenylalanine 1347 form a helical membrane-spanning segment. Topologically, residues tryptophan 1348–valine 1437 are cytoplasmic. Residues proline 1394–proline 1419 form a disordered region.

It localises to the membrane. This is an uncharacterized protein from Caenorhabditis elegans.